Reading from the N-terminus, the 127-residue chain is MAQSVPPGDIQTQPGTKIVFNAPYDDKHTYHIKVINSSARRIGYGIKTTNMKRLGVDPPCGVLDPKEAVLLAVSCDAFAFGQEDTNNDRITVEWTNTPDGAAKQFRREWFQGDGMVRRKNLPIEYNP.

An N-acetylalanine modification is found at Ala-2. Positions 9 to 126 (DIQTQPGTKI…RRKNLPIEYN (118 aa)) constitute an MSP domain.

As to quaternary structure, helical subfilaments are built from MSP dimers; filaments are formed from two subfilaments coiling round one another; and filaments themselves supercoil to produce bundles. Sperm.

The protein localises to the cell projection. The protein resides in the pseudopodium. Its subcellular location is the cytoplasm. It is found in the cytoskeleton. In terms of biological role, central component in molecular interactions underlying sperm crawling. Forms an extensive filament system that extends from sperm villipoda, along the leading edge of the pseudopod. The protein is Major sperm protein 19/31/40/45/50/51/53/59/61/65/81/113/142 (msp-19) of Caenorhabditis elegans.